Reading from the N-terminus, the 104-residue chain is L-rhamnose mutarotase (104 aa).

A substrate-binding site is contributed by tyrosine 18. Histidine 22 serves as the catalytic Proton donor. Substrate-binding positions include tyrosine 41 and 76–77 (WW).

This sequence belongs to the rhamnose mutarotase family. Homodimer.

The protein localises to the cytoplasm. It carries out the reaction alpha-L-rhamnose = beta-L-rhamnose. Its pathway is carbohydrate metabolism; L-rhamnose metabolism. Functionally, involved in the anomeric conversion of L-rhamnose. The chain is L-rhamnose mutarotase from Clostridium beijerinckii (strain ATCC 51743 / NCIMB 8052) (Clostridium acetobutylicum).